A 1207-amino-acid chain; its full sequence is MEMLTKFESRSSRAKGVAFHPTQPWILTSLHNGRIQLWDYRMGTLLDRFDGHDGPVRGIAFHPTQPLFVSGGDDYKVNVWNYKSRKLLFSLCGHMDYVRVCTFHHEYPWILSCSDDQTIRIWNWQSRNCIAILTGHSHYVMCAAFHPSEDLIVSASLDQTVRVWDISGLRMKNAAPVSMSLEDQLAQAHNSISNDLFGSTDAIVKFVLEGHDRGVNWCAFHPTLPLILSAGDDRLVKLWRMTASKAWEVDTCRGHFNNVSCCLFHPHQELILSASEDKTIRVWDLNRRTAVQTFRRDNDRFWFITVHPKLNLFAAAHDSGVMVFKLERERPAHALNINTLLYVNKEKSIVSYDLLRAQSTTVASVKHLGSAWLPPRSLSYNPAEKVALLTSSADNGVYELVNVSSRSNSLPLKDNIKGPGDDAIFVARNRFAVFSRSDQTIEIKDLSNKVTKTIQLPEKTRDIFFAGMGHVLLSTATQVHLFDLQQKKIVSSFNANRVKYVVWSNDNSQAALLGKHYVYIVKKNLELITSIHETIRIKSAVWVENNVLLYATLDHLKYALMSGDTGVIKTLESTLYLVKAKGNMVFALNRAAEPVSFEIDPTEYLFKLALLRKDYEQVLHLIQNSNLVGQAIIAYLQKKGYPEIALQFVEDPSTRFELALECGNLETALELARTIDRPEVWSRLASDAMSYGNHKIAEITFQKLRYFEKLSFLYLITGNAEKLQKMAIIAEKRNDTLSLFQNSLYLNEVESRINILEQAGMYPIAYLTAKSNGLEEKAQQILSHCNKTEEEIKLPSLGSAFTTPVPVNETYTHNWPLLDTSHSTFEKSLQERMEQLAIERQEEQESEEEYEEVEQSLMDVVDEMSDLAESVPEEEVDGWEVEDLAPEEAVNDVVDDASAFVGADEIFLWKRNSPLAADHIAAGDFESAMKILNKQVGAINFSPLKTRFLEIYTASRVYLPTISGLDPLVSYVRRNAETAERSQALPFITRNLASIKSHELHEAYRLVKANKILEAQICFRSIIYLALTTVANSEEEADEISALIDECCRYIVALSCELERRRLGEEDTKRALELSYYFASADLQPMHSIIALRLAINASHKLKNYKSASFLGNKLLQLAESGPAAEAANRAITLGDRNPHDAFEIEYDPHVEMRICPKTLTPVYSGDDFDVCSVCGAVYHKGYVNEVCTVCDVGGIGQKGTGRRFFA.

WD repeat units follow at residues 9 to 50, 51 to 90, 93 to 134, 135 to 174, 210 to 249, 254 to 293, 296 to 336, and 370 to 411; these read SRSS…DRFD, GHDG…LLFS, GHMD…AILT, GHSH…MKNA, GHDR…AWEV, GHFN…AVQT, RDND…HALN, and SAWL…NSLP. Residues serine 409 and serine 942 each carry the phosphoserine modification.

In terms of assembly, oligomeric complex that consists of at least the alpha, beta, beta', gamma, delta, epsilon and zeta subunits.

The protein localises to the cytoplasm. Its subcellular location is the golgi apparatus membrane. In terms of biological role, the coatomer is a cytosolic protein complex that binds to dilysine motifs and reversibly associates with Golgi non-clathrin-coated vesicles, which further mediate biosynthetic protein transport from the ER, via the Golgi up to the trans Golgi network. Coatomer complex is required for budding from Golgi membranes, and is essential for the retrograde Golgi-to-ER transport of dilysine-tagged proteins. In Schizosaccharomyces pombe (strain 972 / ATCC 24843) (Fission yeast), this protein is Putative coatomer subunit alpha.